A 363-amino-acid polypeptide reads, in one-letter code: Peroxisomal (S)-2-hydroxyacid oxidase GLO3 (363 aa).

The 357-residue stretch at 1–357 folds into the FMN hydroxy acid dehydrogenase domain; the sequence is MDQIVNVDEF…TRNHVRTENE (357 aa). Residues 78 to 80, S107, 128 to 130, and T156 contribute to the FMN site; these read PTG and QIY. An a 2-oxocarboxylate-binding site is contributed by Y130. Residue R165 participates in a 2-oxocarboxylate binding. Positions 228 and 250 each coordinate FMN. The Proton acceptor role is filled by H252. Residue R255 coordinates a 2-oxocarboxylate. FMN-binding positions include 283–287 and 306–307; these read DGGVR and GR. Positions 361–363 match the Microbody targeting signal motif; that stretch reads SML.

Belongs to the FMN-dependent alpha-hydroxy acid dehydrogenase family. As to quaternary structure, homotetramer. The cofactor is FMN.

The protein localises to the peroxisome. It carries out the reaction a (2S)-2-hydroxycarboxylate + O2 = a 2-oxocarboxylate + H2O2. The enzyme catalyses 2-hydroxy-4-methylpentanoate + O2 = 4-methyl-2-oxopentanoate + H2O2. The catalysed reaction is 2-hydroxyhexanoate + O2 = 2-oxohexanoate + H2O2. It catalyses the reaction 2-hydroxyoctanoate + O2 = 2-oxooctanoate + H2O2. Functionally, oxidase that catalyzes the oxidation of a broad range of 2-hydroxyacids to the corresponding 2-oxoacids, with a reduction of O2 to H2O2. Displays the highest activity with leucic acid (2-hydroxy-4-methylpentanoate) and has intermediate activity with 2-hydroxyhexanoate and 2-hydroxyoctanote. Shows lower activity with 2-hydroxydodecanoate, valic acid, and isoleucic acid and extremely low activity with glycolate and L-lactate. Cannot use 2-hydroxyhexadecanoate or D-lactate as substrates. May be involved in the conversion or degradation of 2-hydroxyacids produced during the metabolism of fatty acids or amino acids. This chain is Peroxisomal (S)-2-hydroxyacid oxidase GLO3 (GLO3), found in Arabidopsis thaliana (Mouse-ear cress).